The primary structure comprises 321 residues: Transmembrane protein 255A (321 aa).

The next 4 membrane-spanning stretches (helical) occupy residues 29–49 (VFVTVTLLIVSSLIFTLGMAA), 56–76 (VTVGGYYPGVILGFGSILGII), 88–108 (LVASIVFISFGVIAAFCCAIV), and 200–220 (TILNIVGLFLGIITAAVLGGF). A compositionally biased stretch (polar residues) spans 279 to 297 (STPSGLSDDPNGQASSFMW). A disordered region spans residues 279–300 (STPSGLSDDPNGQASSFMWPSN).

This sequence belongs to the TMEM255 family.

Its subcellular location is the membrane. The protein is Transmembrane protein 255A (tmem255a) of Xenopus laevis (African clawed frog).